The chain runs to 357 residues: DNA replication and repair protein RecF (357 aa).

31–38 (GQNGAGKT) is a binding site for ATP.

The protein belongs to the RecF family.

It localises to the cytoplasm. Functionally, the RecF protein is involved in DNA metabolism; it is required for DNA replication and normal SOS inducibility. RecF binds preferentially to single-stranded, linear DNA. It also seems to bind ATP. This is DNA replication and repair protein RecF from Coxiella burnetii (strain RSA 493 / Nine Mile phase I).